A 418-amino-acid chain; its full sequence is Beta-2 adrenergic receptor (418 aa).

The Extracellular portion of the chain corresponds to 1 to 34 (MGQPGNRSVFLLAPNGSHAPDQDVPQERDEAWVV). 2 N-linked (GlcNAc...) asparagine glycosylation sites follow: asparagine 6 and asparagine 15. The helical transmembrane segment at 35 to 58 (GMAIVMSLIVLAIVFGNVLVITAI) threads the bilayer. Topologically, residues 59–71 (AKFERLQTVTNYF) are cytoplasmic. Residues 72–95 (ITSLACADLVMGLAVVPFGASHIL) traverse the membrane as a helical segment. Residues 96 to 106 (MKMWTFGSFWC) lie on the Extracellular side of the membrane. Disulfide bonds link cysteine 106-cysteine 191 and cysteine 184-cysteine 190. A helical membrane pass occupies residues 107–129 (EFWISIDVLCVTASIETLCVIAV). Topologically, residues 130–150 (DRYLAITSPFKYQCLLTKNKA) are cytoplasmic. Tyrosine 141 carries the post-translational modification Phosphotyrosine. The chain crosses the membrane as a helical span at residues 151-174 (RVVILMVWVVSGLISFLPIKMHWY). Topologically, residues 175–196 (QATHREALNCYAEEACCDFFTN) are extracellular. Residues 197–220 (QPYAIASSIVSFYLPLVVMVFVYS) traverse the membrane as a helical segment. Residues 221–274 (RVFQVARRQLQKIDKSEGRFHAQNLSQAEQDGRSGPGHRRSSKFCLKEHKALKT) are Cytoplasmic-facing. Residue serine 246 is modified to Phosphoserine. Residues serine 261 and serine 262 each carry the phosphoserine; by PKA modification. Cysteine 265 carries the S-palmitoyl cysteine lipid modification. Residues 275–298 (LGIIMGTFTLCWLPFFIVNIVHGI) form a helical membrane-spanning segment. Over 299-305 (HDNLIPK) the chain is Extracellular. Residues 306–329 (EVYILLNWVGYVNSAFNPLIYCRS) traverse the membrane as a helical segment. Over 330 to 418 (PDFRMAFQEL…RNCSTNDSML (89 aa)) the chain is Cytoplasmic. Cysteine 341 carries the S-palmitoyl cysteine lipid modification. A phosphoserine; by PKA mark is found at serine 345 and serine 346. A phosphoserine; by BARK mark is found at serine 355 and serine 356. The interval 381-418 (RLCEDAPGPEGCAHRQGTVPDDSTDSQGRNCSTNDSML) is disordered. Proline 387 and proline 400 each carry 4-hydroxyproline. A compositionally biased stretch (polar residues) spans 405 to 418 (DSQGRNCSTNDSML). Residues 415–418 (DSML) carry the PDZ-binding motif.

It belongs to the G-protein coupled receptor 1 family. Adrenergic receptor subfamily. ADRB2 sub-subfamily. Binds NHERF1 and GPRASP1. Interacts with ARRB1 and ARRB2. Interacts with SRC. Interacts with USP20 and USP33. Interacts with VHL; the interaction, which is increased on hydroxylation of ADRB2, ubiquitinates ADRB2 leading to its degradation. Interacts with EGLN3; the interaction hydroxylates ADRB2 facilitating VHL-E3 ligase-mediated ubiquitination. Interacts (via PDZ-binding motif) with SNX27 (via PDZ domain); the interaction is required when endocytosed to prevent degradation in lysosomes and promote recycling to the plasma membrane. Interacts with CNIH4. Interacts with ARRDC3. Interacts with NEDD4. Interacts with MARCHF2. In terms of processing, palmitoylated; may reduce accessibility of Ser-345 and Ser-346 by anchoring Cys-341 to the plasma membrane. Agonist stimulation promotes depalmitoylation and further allows Ser-345 and Ser-346 phosphorylation. Phosphorylated by PKA and BARK upon agonist stimulation, which mediates homologous desensitization of the receptor. PKA-mediated phosphorylation seems to facilitate phosphorylation by BARK. Post-translationally, phosphorylation of Tyr-141 is induced by insulin and leads to supersensitization of the receptor. In terms of processing, polyubiquitinated. Agonist-induced ubiquitination leads to sort internalized receptors to the lysosomes for degradation. Deubiquitination by USP20 and USP33, leads to ADRB2 recycling and resensitization after prolonged agonist stimulation. USP20 and USP33 are constitutively associated and are dissociated immediately after agonist stimulation. Ubiquitination by the VHL-E3 ligase complex is oxygen-dependent. Hydroxylation by EGLN3 occurs only under normoxia and increases the interaction with VHL and the subsequent ubiquitination and degradation of ADRB2. Post-translationally, palmitoylated. Mainly palmitoylated at Cys-341. Palmitoylation may reduce accessibility of phosphorylation sites by anchoring the receptor to the plasma membrane. Agonist stimulation promotes depalmitoylation and further allows Ser-345 and Ser-346 phosphorylation. Also undergoes transient, ligand-induced palmitoylation at Cys-265 probably by ZDHHC9, ZDHHC14 and ZDHHC18 within the Golgi. Palmitoylation at Cys-265 requires phosphorylation by PKA and receptor internalization and stabilizes the receptor. Could be depalmitoylated by LYPLA1 at the plasma membrane. As to expression, expressed in heart, liver, lung, skeletal muscle and subcutaneous adipose tissue.

It localises to the cell membrane. The protein resides in the early endosome. The protein localises to the golgi apparatus. Its function is as follows. Beta-adrenergic receptors mediate the catecholamine-induced activation of adenylate cyclase through the action of G proteins. The beta-2-adrenergic receptor binds epinephrine with an approximately 30-fold greater affinity than it does norepinephrine. The chain is Beta-2 adrenergic receptor (ADRB2) from Sus scrofa (Pig).